The primary structure comprises 718 residues: Phenylalanine--tRNA ligase beta subunit (718 aa).

Residues 39–153 enclose the tRNA-binding domain; sequence LNEISGIKFG…IFDLESNPLK (115 aa). A B5 domain is found at 386-460; that stretch reads SKKTFLDLNY…RFYGLEKLKD (75 aa). Mg(2+) is bound by residues aspartate 438, aspartate 444, and aspartate 448.

The protein belongs to the phenylalanyl-tRNA synthetase beta subunit family. Type 1 subfamily. As to quaternary structure, tetramer of two alpha and two beta subunits. Mg(2+) serves as cofactor.

It is found in the cytoplasm. It carries out the reaction tRNA(Phe) + L-phenylalanine + ATP = L-phenylalanyl-tRNA(Phe) + AMP + diphosphate + H(+). The chain is Phenylalanine--tRNA ligase beta subunit from Mesomycoplasma hyopneumoniae (strain J / ATCC 25934 / NCTC 10110) (Mycoplasma hyopneumoniae).